The chain runs to 212 residues: Uridine kinase (212 aa).

13-20 (GASASGKS) is an ATP binding site.

It belongs to the uridine kinase family.

It localises to the cytoplasm. The catalysed reaction is uridine + ATP = UMP + ADP + H(+). It carries out the reaction cytidine + ATP = CMP + ADP + H(+). It functions in the pathway pyrimidine metabolism; CTP biosynthesis via salvage pathway; CTP from cytidine: step 1/3. Its pathway is pyrimidine metabolism; UMP biosynthesis via salvage pathway; UMP from uridine: step 1/1. The chain is Uridine kinase from Shewanella denitrificans (strain OS217 / ATCC BAA-1090 / DSM 15013).